A 255-amino-acid chain; its full sequence is Small ribosomal subunit protein uS2 (255 aa).

Belongs to the universal ribosomal protein uS2 family.

This chain is Small ribosomal subunit protein uS2, found in Streptococcus pyogenes serotype M28 (strain MGAS6180).